Consider the following 427-residue polypeptide: UDP-N-acetylglucosamine 1-carboxyvinyltransferase 2 (427 aa).

19–20 provides a ligand contact to phosphoenolpyruvate; the sequence is KN. Arginine 91 lines the UDP-N-acetyl-alpha-D-glucosamine pocket. Cysteine 115 functions as the Proton donor in the catalytic mechanism. Residue cysteine 115 is modified to 2-(S-cysteinyl)pyruvic acid O-phosphothioketal. Residues aspartate 307 and valine 329 each coordinate UDP-N-acetyl-alpha-D-glucosamine.

Belongs to the EPSP synthase family. MurA subfamily.

The protein resides in the cytoplasm. The catalysed reaction is phosphoenolpyruvate + UDP-N-acetyl-alpha-D-glucosamine = UDP-N-acetyl-3-O-(1-carboxyvinyl)-alpha-D-glucosamine + phosphate. It participates in cell wall biogenesis; peptidoglycan biosynthesis. Its function is as follows. Cell wall formation. Adds enolpyruvyl to UDP-N-acetylglucosamine. The polypeptide is UDP-N-acetylglucosamine 1-carboxyvinyltransferase 2 (Prochlorococcus marinus (strain SARG / CCMP1375 / SS120)).